The chain runs to 385 residues: 8-amino-7-oxononanoate synthase (385 aa).

R21 serves as a coordination point for substrate. 108–109 lines the pyridoxal 5'-phosphate pocket; sequence GF. Residue H133 coordinates substrate. Residues S179, H207, and T233 each contribute to the pyridoxal 5'-phosphate site. At K236 the chain carries N6-(pyridoxal phosphate)lysine. Residue T352 participates in substrate binding.

Belongs to the class-II pyridoxal-phosphate-dependent aminotransferase family. BioF subfamily. In terms of assembly, homodimer. It depends on pyridoxal 5'-phosphate as a cofactor.

The catalysed reaction is 6-carboxyhexanoyl-[ACP] + L-alanine + H(+) = (8S)-8-amino-7-oxononanoate + holo-[ACP] + CO2. The protein operates within cofactor biosynthesis; biotin biosynthesis. In terms of biological role, catalyzes the decarboxylative condensation of pimeloyl-[acyl-carrier protein] and L-alanine to produce 8-amino-7-oxononanoate (AON), [acyl-carrier protein], and carbon dioxide. The polypeptide is 8-amino-7-oxononanoate synthase (Salmonella paratyphi C (strain RKS4594)).